The chain runs to 645 residues: Protein hrpC2 (645 aa).

The next 7 membrane-spanning stretches (helical) occupy residues 18-34 (VAIA…MILP), 43-59 (LLGI…MVTM), 108-124 (LVVG…FLII), 201-217 (IAGL…GIVV), 243-259 (VSQI…GVMI), 285-301 (ARAL…FAFV), and 308-324 (LFLL…YTIW). Positions 334–354 (DQRKLPSASRKGAKGEAPHIR) are disordered.

The protein belongs to the FHIPEP (flagella/HR/invasion proteins export pore) family.

It localises to the cell inner membrane. Functionally, involved in the secretion of a proteinaceous elicitor of the hypersensitivity response in plants. The sequence is that of Protein hrpC2 (hrpC2) from Xanthomonas euvesicatoria.